The sequence spans 115 residues: MKFVLLFGVLLVTLFSYSSAEMLDDFDQADEDELLSLIEKEEARAKECTPRFYDCSRDRHSCCRSELFKDVCTCFYPEGGDNEVCTCQQPKHLKYMEKAADKAKKFGGKIKKWFG.

The signal sequence occupies residues 1-20; it reads MKFVLLFGVLLVTLFSYSSA. Residues 21 to 44 constitute a propeptide that is removed on maturation; it reads EMLDDFDQADEDELLSLIEKEEAR. Intrachain disulfides connect cysteine 48-cysteine 63, cysteine 55-cysteine 72, cysteine 62-cysteine 87, and cysteine 74-cysteine 85.

It belongs to the neurotoxin 19 (CSTX) family. 01 subfamily. Expressed by the venom gland.

Its subcellular location is the secreted. In Lycosa singoriensis (Wolf spider), this protein is U3-lycotoxin-Ls1b.